The primary structure comprises 397 residues: Elongation factor Tu-1 (397 aa).

The 197-residue stretch at 10 to 206 folds into the tr-type G domain; sequence KPHVNIGTIG…AVDEAIPEPE (197 aa). Residues 19–26 are G1; it reads GHIDHGKT. Residue 19–26 coordinates GTP; it reads GHIDHGKT. A Mg(2+)-binding site is contributed by threonine 26. The tract at residues 62–66 is G2; it reads GITIS. The G3 stretch occupies residues 83 to 86; sequence DCPG. GTP contacts are provided by residues 83–87 and 138–141; these read DCPGH and NKAD. The G4 stretch occupies residues 138–141; the sequence is NKAD. Residues 176–178 form a G5 region; that stretch reads SAL.

The protein belongs to the TRAFAC class translation factor GTPase superfamily. Classic translation factor GTPase family. EF-Tu/EF-1A subfamily. In terms of assembly, monomer.

The protein localises to the cytoplasm. The catalysed reaction is GTP + H2O = GDP + phosphate + H(+). GTP hydrolase that promotes the GTP-dependent binding of aminoacyl-tRNA to the A-site of ribosomes during protein biosynthesis. This Streptomyces coelicolor (strain ATCC BAA-471 / A3(2) / M145) protein is Elongation factor Tu-1.